The sequence spans 90 residues: MFKFSIPLLLFIFLFFSCINSITHIRVGAFYPPPAHLQPQSGFIWEFLGTRNPDKSNEKLPERILSGSSGSCSSCSISSSNGSSSRSSKQ.

The first 21 residues, 1–21 (MFKFSIPLLLFIFLFFSCINS), serve as a signal peptide directing secretion. Positions 56 to 90 (SNEKLPERILSGSSGSCSSCSISSSNGSSSRSSKQ) are disordered. Over residues 66–90 (SGSSGSCSSCSISSSNGSSSRSSKQ) the composition is skewed to low complexity. N-linked (GlcNAc...) asparagine glycosylation is present at Asn-81.

This is an uncharacterized protein from Dictyostelium discoideum (Social amoeba).